We begin with the raw amino-acid sequence, 238 residues long: Orotidine 5'-phosphate decarboxylase (238 aa).

Substrate-binding positions include D13, K35, D62–T71, T121, R182, Q191, G211, and R212. The Proton donor role is filled by K64.

The protein belongs to the OMP decarboxylase family. Type 1 subfamily. Homodimer.

It catalyses the reaction orotidine 5'-phosphate + H(+) = UMP + CO2. Its pathway is pyrimidine metabolism; UMP biosynthesis via de novo pathway; UMP from orotate: step 2/2. Functionally, catalyzes the decarboxylation of orotidine 5'-monophosphate (OMP) to uridine 5'-monophosphate (UMP). The chain is Orotidine 5'-phosphate decarboxylase from Saccharophagus degradans (strain 2-40 / ATCC 43961 / DSM 17024).